The primary structure comprises 116 residues: Transmembrane protein 213 (116 aa).

An N-terminal signal peptide occupies residues 1 to 35; it reads MAQSGVFLRNPGHLTSAPQAALLFSLVLTSFHLSC. The Extracellular portion of the chain corresponds to 36 to 79; that stretch reads GTETSSSNSTLSAHHPDPGTLEQCANVDFCPLASLCCRASVDEY. Residues 80–100 traverse the membrane as a helical segment; that stretch reads GWIAAAVGWSFWFLTLILLCV. Over 101 to 116 the chain is Cytoplasmic; sequence DKLMKLTPEEPKDLAA.

The protein resides in the membrane. This chain is Transmembrane protein 213 (Tmem213), found in Mus musculus (Mouse).